Reading from the N-terminus, the 48-residue chain is Protein PsbN (48 aa).

Residues 12 to 34 form a helical membrane-spanning segment; that stretch reads LLIAMVTITFGLTGYGLYTAFGP.

This sequence belongs to the PsbN family.

The protein localises to the cellular thylakoid membrane. Functionally, may play a role in photosystem I and II biogenesis. The polypeptide is Protein PsbN (Prochlorococcus marinus (strain MIT 9313)).